The primary structure comprises 715 residues: Polyribonucleotide nucleotidyltransferase (715 aa).

D489 and D495 together coordinate Mg(2+). One can recognise a KH domain in the interval 556-615 (PRIETLRIPTEKIREVIGTGGKVIREICEKTGAKINIEDDGTVKVASSDGNSIKAAINWI). One can recognise an S1 motif domain in the interval 625 to 693 (GHIYDGTVVK…DRGKVRLSMR (69 aa)).

This sequence belongs to the polyribonucleotide nucleotidyltransferase family. It depends on Mg(2+) as a cofactor.

The protein resides in the cytoplasm. It catalyses the reaction RNA(n+1) + phosphate = RNA(n) + a ribonucleoside 5'-diphosphate. Its function is as follows. Involved in mRNA degradation. Catalyzes the phosphorolysis of single-stranded polyribonucleotides processively in the 3'- to 5'-direction. This chain is Polyribonucleotide nucleotidyltransferase, found in Beijerinckia indica subsp. indica (strain ATCC 9039 / DSM 1715 / NCIMB 8712).